Here is a 327-residue protein sequence, read N- to C-terminus: Serum response factor homolog (327 aa).

The segment at 12 to 43 is disordered; the sequence is QKLQNASPALPEGTSSTPTPSSSTGLLPNGKK. Residues 25 to 35 are compositionally biased toward low complexity; sequence TSSTPTPSSST. Positions 45-105 constitute an MADS-box domain; that stretch reads KGRVKIKMEY…GHVYTYATPK (61 aa). The disordered stretch occupies residues 189 to 225; the sequence is TFGEDDYNNDESGDDSDSEEASSDIKEEYQGSPTMVK. Positions 191-210 are enriched in acidic residues; the sequence is GEDDYNNDESGDDSDSEEAS.

Expressed in muscle, varying with age, decreasing twofold during the first week of adulthood.

The protein resides in the nucleus. Its function is as follows. Transcription factor. Regulates myogenesis, in cooperation with transcription factors hlh-1 and hnd-1. Required for maintenance of muscle in adulthood. This chain is Serum response factor homolog, found in Caenorhabditis elegans.